A 174-amino-acid polypeptide reads, in one-letter code: Scytalone dehydratase-like protein Arp1 (174 aa).

Tyrosine 49 lines the substrate pocket. Residues histidine 84 and histidine 109 contribute to the active site. Asparagine 130 is a substrate binding site.

It belongs to the scytalone dehydratase family. In terms of assembly, homotrimer. Each subunit contains an active site, located in the central part of the hydrophobic core of the monomer, which functions independently.

Scytalone dehydratase-like protein; part of the Pks2 gene cluster that mediates the formation of infectious structures (appressoria), enabling these fungi to kill insects faster. The product of the Pks2 gene cluster is different from the one of Pks1 and has still not been identified. The sequence is that of Scytalone dehydratase-like protein Arp1 from Metarhizium majus (strain ARSEF 297).